The sequence spans 391 residues: MSAAADRLNLTSGHLNAGRKRSSSSVSLKAAEKPFKVTVIGSGNWGTTIAKVVAENCKGYPEVFAPIVQMWVFEEEINGEKLTEIINTRHQNVKYLPGITLPDNLVANPDLIDSVKDVDIIVFNIPHQFLPRICSQLKGHVDSHVRAISCLKGFEVGAKGVQLLSSYITEELGIQCGALSGANIATEVAQEHWSETTVAYHIPKDFRGEGKDVDHKVLKALFHRPYFHVSVIEDVAGISICGALKNVVALGCGFVEGLGWGNNASAAIQRVGLGEIIRFGQMFFPESREETYYQESAGVADLITTCAGGRNVKVARLMATSGKDAWECEKELLNGQSAQGLITCKEVHEWLETCGSVEDFPLFEAVYQIVYNNYPMKNLPDMIEELDLHED.

NAD(+) is bound by residues 41 to 46, Phe129, Lys152, and Ala185; that span reads GSGNWG. Position 152 (Lys152) interacts with substrate. The active-site Proton acceptor is the Lys245. NAD(+) contacts are provided by Arg310 and Gln339. 310 to 311 contacts substrate; that stretch reads RN.

Belongs to the NAD-dependent glycerol-3-phosphate dehydrogenase family.

It localises to the cytoplasm. It carries out the reaction sn-glycerol 3-phosphate + NAD(+) = dihydroxyacetone phosphate + NADH + H(+). This is Glycerol-3-phosphate dehydrogenase [NAD(+)] 1 (GPD1) from Saccharomyces uvarum (Yeast).